A 239-amino-acid chain; its full sequence is Sugar fermentation stimulation protein homolog (239 aa).

The protein belongs to the SfsA family.

This is Sugar fermentation stimulation protein homolog from Mannheimia succiniciproducens (strain KCTC 0769BP / MBEL55E).